We begin with the raw amino-acid sequence, 137 residues long: Small ribosomal subunit protein uS11 (137 aa).

A compositionally biased stretch (low complexity) spans 1–11 (MAKQAKAGAAR). The segment at 1-32 (MAKQAKAGAARRPQRGRRRERKNVPRGQAHVQ) is disordered. Positions 12-21 (RPQRGRRRER) are enriched in basic residues.

It belongs to the universal ribosomal protein uS11 family. As to quaternary structure, part of the 30S ribosomal subunit. Interacts with proteins S7 and S18. Binds to IF-3.

Functionally, located on the platform of the 30S subunit, it bridges several disparate RNA helices of the 16S rRNA. Forms part of the Shine-Dalgarno cleft in the 70S ribosome. The protein is Small ribosomal subunit protein uS11 of Herpetosiphon aurantiacus (strain ATCC 23779 / DSM 785 / 114-95).